The primary structure comprises 768 residues: Dual specificity calcium/calmodulin-dependent 3',5'-cyclic nucleotide phosphodiesterase 1C (768 aa).

Position 1 is an N-acetylmethionine (methionine 1). Residues 183–206 (EKPRFKSIVHAVQAGIFVERMYRR) are calmodulin-binding. Residues 211–588 (VGLSYPPAVI…ERWRAKVPKE (378 aa)) form the PDEase domain. Histidine 288 serves as the catalytic Proton donor. Zn(2+) contacts are provided by histidine 292, histidine 328, aspartate 329, and aspartate 436. Aspartate 329 contributes to the Mg(2+) binding site. Disordered stretches follow at residues 513–557 (LIDE…INNS) and 584–719 (KVPK…PPLR). Polar residues-rich tracts occupy residues 516-536 (ETSQ…INSS) and 543-557 (VKSS…INNS). The span at 584-614 (KVPKEEKAKKEAEEKARLAAEEKQKEMEAKS) shows a compositional bias: basic and acidic residues. Polar residues predominate over residues 631–641 (ETKGQVNGTRT). 2 stretches are compositionally biased toward basic and acidic residues: residues 642 to 659 (SKGD…KAGE) and 665 to 692 (DLKD…DGTK). Residues 698-712 (SPAPSTSSTSRLTLP) show a composition bias toward low complexity.

The protein belongs to the cyclic nucleotide phosphodiesterase family. PDE1 subfamily. As to quaternary structure, homodimer. The cofactor is Zn(2+). It depends on Mg(2+) as a cofactor. In terms of tissue distribution, highly expressed in olfactory epithelium and at moderate levels, in cerebellum, as well as weakly in forebrain, testis, heart and lung. In the olfactory epithelium, expressed by sensory neurons, but not epithelial cells.

Its subcellular location is the lysosome. It catalyses the reaction a nucleoside 3',5'-cyclic phosphate + H2O = a nucleoside 5'-phosphate + H(+). The enzyme catalyses 3',5'-cyclic GMP + H2O = GMP + H(+). The catalysed reaction is 3',5'-cyclic AMP + H2O = AMP + H(+). Type I PDE are activated by the binding of calmodulin in the presence of Ca(2+). In terms of biological role, calmodulin-dependent cyclic nucleotide phosphodiesterase with a dual specificity for the second messengers cAMP and cGMP, which are key regulators of many important physiological processes. Has a high affinity for both cAMP and cGMP. Modulates the amplitude and duration of the cAMP signal in sensory cilia in response to odorant stimulation, hence contributing to the generation of action potentials. Regulates smooth muscle cell proliferation. Regulates the stability of growth factor receptors, including PDGFRB. This chain is Dual specificity calcium/calmodulin-dependent 3',5'-cyclic nucleotide phosphodiesterase 1C, found in Rattus norvegicus (Rat).